The sequence spans 321 residues: Transaldolase (321 aa).

Lys132 serves as the catalytic Schiff-base intermediate with substrate.

It belongs to the transaldolase family. Type 1 subfamily. Homodimer.

The protein resides in the cytoplasm. It carries out the reaction D-sedoheptulose 7-phosphate + D-glyceraldehyde 3-phosphate = D-erythrose 4-phosphate + beta-D-fructose 6-phosphate. It functions in the pathway carbohydrate degradation; pentose phosphate pathway; D-glyceraldehyde 3-phosphate and beta-D-fructose 6-phosphate from D-ribose 5-phosphate and D-xylulose 5-phosphate (non-oxidative stage): step 2/3. Transaldolase is important for the balance of metabolites in the pentose-phosphate pathway. This chain is Transaldolase, found in Agrobacterium fabrum (strain C58 / ATCC 33970) (Agrobacterium tumefaciens (strain C58)).